The following is a 271-amino-acid chain: MPELPEVETALRGISPYLKNFTIEKVVVRKPKLRWAVSEELITLKNVKIVDLTRRAKYLIIHTEKGYIIGHLGMSGSVRIVPQDSAIDKHDHIDIVVNNGKLLRYNDPRRFGAWLWTENLDDFHLFLKLGPEPLSDEFNAEYLFKKSRQKSTALKTFLMDNAVVVGVGNIYANESLFICGIHPLKLAKNLTRNQCFSLVNTIKDVLRKAIIQGGTTLKDFLQPDGRPGYFAQELLVYGNKDKPCPKCGGKIESLIIGQRNSFFCPKCQKRG.

Catalysis depends on Pro-2, which acts as the Schiff-base intermediate with DNA. Glu-3 acts as the Proton donor in catalysis. The active-site Proton donor; for beta-elimination activity is Lys-57. Positions 90, 109, and 150 each coordinate DNA. The segment at Leu-235–Lys-269 adopts an FPG-type zinc-finger fold. Residue Arg-259 is the Proton donor; for delta-elimination activity of the active site.

Belongs to the FPG family. Monomer. It depends on Zn(2+) as a cofactor.

It carries out the reaction Hydrolysis of DNA containing ring-opened 7-methylguanine residues, releasing 2,6-diamino-4-hydroxy-5-(N-methyl)formamidopyrimidine.. The enzyme catalyses 2'-deoxyribonucleotide-(2'-deoxyribose 5'-phosphate)-2'-deoxyribonucleotide-DNA = a 3'-end 2'-deoxyribonucleotide-(2,3-dehydro-2,3-deoxyribose 5'-phosphate)-DNA + a 5'-end 5'-phospho-2'-deoxyribonucleoside-DNA + H(+). Functionally, involved in base excision repair of DNA damaged by oxidation or by mutagenic agents. Acts as a DNA glycosylase that recognizes and removes damaged bases. Has a preference for oxidized purines, such as 7,8-dihydro-8-oxoguanine (8-oxoG). Has AP (apurinic/apyrimidinic) lyase activity and introduces nicks in the DNA strand. Cleaves the DNA backbone by beta-delta elimination to generate a single-strand break at the site of the removed base with both 3'- and 5'-phosphates. This Haemophilus influenzae (strain 86-028NP) protein is Formamidopyrimidine-DNA glycosylase.